The following is a 252-amino-acid chain: Major prion protein (252 aa).

Positions 1–22 are cleaved as a signal peptide; sequence MANLGCWMLVLFVATWSDLGLC. An interaction with ADGRG6 region spans residues 23 to 38; the sequence is KKRPKPGGWNTGGSRY. Residues 23 to 229 are interaction with GRB2, ERI3 and SYN1; sequence KKRPKPGGWN…ESQAYYQRGS (207 aa). The interval 26–106 is disordered; sequence PKPGGWNTGG…QWNKPSKPKT (81 aa). Repeat copies occupy residues 51 to 58, 59 to 66, 67 to 74, 75 to 82, and 83 to 90. Residues 51–90 are 5 X 8 AA tandem repeats of P-H-G-G-G-W-G-Q; the sequence is PQGGGWGQPHGGGWGQPHGGGWGQPHGGSWGQPHGGGWGQ. Residues 52–94 show a composition bias toward gly residues; that stretch reads QGGGWGQPHGGGWGQPHGGGWGQPHGGSWGQPHGGGWGQGGGT. Histidine 60, glycine 61, glycine 62, histidine 68, glycine 69, glycine 70, histidine 76, glycine 77, glycine 78, histidine 84, glycine 85, and glycine 86 together coordinate Cu(2+). A disulfide bond links cysteine 178 and cysteine 213. N-linked (GlcNAc...) asparagine glycosylation is found at asparagine 180 and asparagine 196. Serine 229 is lipidated: GPI-anchor amidated serine. The propeptide at 230-252 is removed in mature form; sequence SMVLFSSPPVILLISFLIFLIVG.

It belongs to the prion family. Monomer and homodimer. Has a tendency to aggregate into amyloid fibrils containing a cross-beta spine, formed by a steric zipper of superposed beta-strands. Soluble oligomers may represent an intermediate stage on the path to fibril formation. Copper binding may promote oligomerization. Interacts with GRB2, APP, ERI3/PRNPIP and SYN1. Mislocalized cytosolically exposed PrP interacts with MGRN1; this interaction alters MGRN1 subcellular location and causes lysosomal enlargement. Interacts with APP. Interacts with KIAA1191. Interacts with ADGRG6.

The protein resides in the cell membrane. Its subcellular location is the golgi apparatus. Its function is as follows. Its primary physiological function is unclear. May play a role in neuronal development and synaptic plasticity. May be required for neuronal myelin sheath maintenance. May promote myelin homeostasis through acting as an agonist for ADGRG6 receptor. May play a role in iron uptake and iron homeostasis. Soluble oligomers are toxic to cultured neuroblastoma cells and induce apoptosis (in vitro). Association with GPC1 (via its heparan sulfate chains) targets PRNP to lipid rafts. Also provides Cu(2+) or Zn(2+) for the ascorbate-mediated GPC1 deaminase degradation of its heparan sulfate side chains. The protein is Major prion protein (PRNP) of Sapajus apella (Brown-capped capuchin).